A 204-amino-acid chain; its full sequence is Guanylate kinase (204 aa).

One can recognise a Guanylate kinase-like domain in the interval 5-184 (GLLLVLSGPS…AVNHIKAIVD (180 aa)). 12 to 19 (GPSGVGKG) is a binding site for ATP.

It belongs to the guanylate kinase family.

It is found in the cytoplasm. The enzyme catalyses GMP + ATP = GDP + ADP. Functionally, essential for recycling GMP and indirectly, cGMP. The protein is Guanylate kinase of Lactobacillus delbrueckii subsp. bulgaricus (strain ATCC 11842 / DSM 20081 / BCRC 10696 / JCM 1002 / NBRC 13953 / NCIMB 11778 / NCTC 12712 / WDCM 00102 / Lb 14).